The sequence spans 176 residues: Macro domain-containing protein lmo2759 (176 aa).

Residues 1–175 (MEITIVKGDI…LYNKLINSEV (175 aa)) enclose the Macro domain.

It belongs to the MacroD-type family.

In Listeria monocytogenes serovar 1/2a (strain ATCC BAA-679 / EGD-e), this protein is Macro domain-containing protein lmo2759.